A 170-amino-acid chain; its full sequence is Large ribosomal subunit protein uL5 (170 aa).

This sequence belongs to the universal ribosomal protein uL5 family. Part of the 50S ribosomal subunit; contacts the 5S rRNA and probably tRNA. Forms a bridge to the 30S subunit in the 70S ribosome.

In terms of biological role, this is one of the proteins that bind and probably mediate the attachment of the 5S RNA into the large ribosomal subunit, where it forms part of the central protuberance. In the 70S ribosome it contacts protein S13 of the 30S subunit (bridge B1b), connecting the 2 subunits; this bridge is implicated in subunit movement. May contact the P site tRNA; the 5S rRNA and some of its associated proteins might help stabilize positioning of ribosome-bound tRNAs. In Thermoplasma acidophilum (strain ATCC 25905 / DSM 1728 / JCM 9062 / NBRC 15155 / AMRC-C165), this protein is Large ribosomal subunit protein uL5.